The following is a 263-amino-acid chain: HTH-type transcriptional repressor NanR (263 aa).

An HTH gntR-type domain is found at 30-98 (KKLSEMVEEE…NGERARVSRP (69 aa)). Positions 58–77 (ERELMAFFNVGRPSVREALA) form a DNA-binding region, H-T-H motif.

This sequence belongs to the NanR family.

Its function is as follows. Transcriptional repressor that controls expression of the genes required for the catabolism of sialic acids. This chain is HTH-type transcriptional repressor NanR, found in Salmonella arizonae (strain ATCC BAA-731 / CDC346-86 / RSK2980).